Consider the following 226-residue polypeptide: PKHD-type hydroxylase BP3529 (226 aa).

In terms of domain architecture, Fe2OG dioxygenase spans 78 to 178; the sequence is KIFPPLFNRY…RISAFFWLQS (101 aa). 3 residues coordinate Fe cation: H96, D98, and H159. R169 contributes to the 2-oxoglutarate binding site.

It depends on Fe(2+) as a cofactor. L-ascorbate serves as cofactor.

This Bordetella pertussis (strain Tohama I / ATCC BAA-589 / NCTC 13251) protein is PKHD-type hydroxylase BP3529.